Here is a 120-residue protein sequence, read N- to C-terminus: Nascent polypeptide-associated complex protein (120 aa).

One can recognise an NAC-A/B domain in the interval 12–80 (GMNPAKMKQM…VKEVPKSLEI (69 aa)).

It belongs to the NAC-alpha family. As to quaternary structure, homodimer. Interacts with the ribosome. Binds ribosomal RNA.

Functionally, contacts the emerging nascent chain on the ribosome. This chain is Nascent polypeptide-associated complex protein, found in Methanosarcina mazei (strain ATCC BAA-159 / DSM 3647 / Goe1 / Go1 / JCM 11833 / OCM 88) (Methanosarcina frisia).